The sequence spans 230 residues: 5'-methylthioadenosine/S-adenosylhomocysteine nucleosidase (230 aa).

The active-site Proton acceptor is glutamate 12. Substrate contacts are provided by residues glycine 78, isoleucine 153, and 174–175; that span reads ME. Aspartate 198 serves as the catalytic Proton donor.

It belongs to the PNP/UDP phosphorylase family. MtnN subfamily.

It catalyses the reaction S-adenosyl-L-homocysteine + H2O = S-(5-deoxy-D-ribos-5-yl)-L-homocysteine + adenine. The catalysed reaction is S-methyl-5'-thioadenosine + H2O = 5-(methylsulfanyl)-D-ribose + adenine. It carries out the reaction 5'-deoxyadenosine + H2O = 5-deoxy-D-ribose + adenine. It functions in the pathway amino-acid biosynthesis; L-methionine biosynthesis via salvage pathway; S-methyl-5-thio-alpha-D-ribose 1-phosphate from S-methyl-5'-thioadenosine (hydrolase route): step 1/2. In terms of biological role, catalyzes the irreversible cleavage of the glycosidic bond in both 5'-methylthioadenosine (MTA) and S-adenosylhomocysteine (SAH/AdoHcy) to adenine and the corresponding thioribose, 5'-methylthioribose and S-ribosylhomocysteine, respectively. Also cleaves 5'-deoxyadenosine, a toxic by-product of radical S-adenosylmethionine (SAM) enzymes, into 5-deoxyribose and adenine. This Shewanella frigidimarina (strain NCIMB 400) protein is 5'-methylthioadenosine/S-adenosylhomocysteine nucleosidase.